A 152-amino-acid polypeptide reads, in one-letter code: Small ribosomal subunit protein uS19u (152 aa).

It belongs to the universal ribosomal protein uS19 family.

It is found in the cytoplasm. The chain is Small ribosomal subunit protein uS19u (RPS15A) from Arabidopsis thaliana (Mouse-ear cress).